A 270-amino-acid chain; its full sequence is NAD(P)H-hydrate epimerase (270 aa).

The region spanning 25–234 (FQQLMDLMQN…DLLAPEAIYQ (210 aa)) is the YjeF N-terminal domain. (6S)-NADPHX is bound at residue 73–77 (DNGGQ). Asn-74 and Asp-144 together coordinate K(+). (6S)-NADPHX is bound by residues 148–154 (GVGLYGH) and Glu-177. Thr-180 lines the K(+) pocket.

This sequence belongs to the NnrE/AIBP family. The cofactor is K(+).

The enzyme catalyses (6R)-NADHX = (6S)-NADHX. The catalysed reaction is (6R)-NADPHX = (6S)-NADPHX. In terms of biological role, catalyzes the epimerization of the S- and R-forms of NAD(P)HX, a damaged form of NAD(P)H that is a result of enzymatic or heat-dependent hydration. This is a prerequisite for the S-specific NAD(P)H-hydrate dehydratase to allow the repair of both epimers of NAD(P)HX. The polypeptide is NAD(P)H-hydrate epimerase (Legionella pneumophila (strain Corby)).